The chain runs to 533 residues: Dipeptide-binding protein (533 aa).

The N-terminal stretch at methionine 1–alanine 24 is a signal peptide.

The protein belongs to the bacterial solute-binding protein 5 family.

The protein localises to the periplasm. In terms of biological role, binds different dipeptides. Probably bind only L-amino acid containing dipeptides. This Pseudomonas aeruginosa (strain ATCC 15692 / DSM 22644 / CIP 104116 / JCM 14847 / LMG 12228 / 1C / PRS 101 / PAO1) protein is Dipeptide-binding protein.